The chain runs to 1098 residues: Sister-chromatid cohesion protein 3 (1098 aa).

The disordered stretch occupies residues 1 to 68 (MEDSPQGLKR…RSRTHPPQQN (68 aa)). The stretch at 245–265 (RVDSLNKRLSVTHEQITTLED) forms a coiled coil. The 86-residue stretch at 275–360 (FVHRYRDIDN…QRFSNRMIEM (86 aa)) folds into the SCD domain. Coiled coils occupy residues 632–653 (KLKDLEDELLDKITSAIREVKD), 888–908 (LESLKRAYHRYSSELSSGREE), and 1009–1032 (LETLEEKCLKNEDLQDDKEAANVR). Positions 1027-1077 (EAANVRRRGRPRKRPETERKRLFDEQSGSDEDESISGGSDREDKLDEDAPL) are disordered. Residues 1040–1050 (RPETERKRLFD) are compositionally biased toward basic and acidic residues.

This sequence belongs to the SCC3 family. As to quaternary structure, part of the cohesin complex. Interacts with DEK3. Expressed in roots, mature leaves, buds and seedlings.

Its subcellular location is the nucleus. The protein localises to the chromosome. Its function is as follows. Essential component of cohesin complex, a complex required for the cohesion of sister chromatids after DNA replication. The cohesin complex apparently forms a large proteinaceous ring within which sister chromatids can be trapped. At anaphase, the complex is cleaved and dissociates from chromatin, allowing sister chromatids to segregate. The cohesin complex may also play a role in spindle pole assembly during mitosis. Required for centromere cohesion maintenance at anaphase I and for the monopolar orientation of the kinetochores during both male and female meiosis. Also involved in mitosis. This Arabidopsis thaliana (Mouse-ear cress) protein is Sister-chromatid cohesion protein 3.